A 239-amino-acid polypeptide reads, in one-letter code: Protein GrpE (239 aa).

Disordered regions lie at residues 1 to 60 and 208 to 239; these read MIEN…SNND and SMGP…SEDV. The span at 28-42 shows a compositional bias: polar residues; sequence SMQNSTTENDELSSQ. Composition is skewed to basic and acidic residues over residues 43-53 and 216-225; these read KTEEINTEELK and SQQEVEKDTV. The span at 226-239 shows a compositional bias: acidic residues; sequence EGDVDSDANTSEDV.

The protein belongs to the GrpE family. Homodimer.

The protein localises to the cytoplasm. Functionally, participates actively in the response to hyperosmotic and heat shock by preventing the aggregation of stress-denatured proteins, in association with DnaK and GrpE. It is the nucleotide exchange factor for DnaK and may function as a thermosensor. Unfolded proteins bind initially to DnaJ; upon interaction with the DnaJ-bound protein, DnaK hydrolyzes its bound ATP, resulting in the formation of a stable complex. GrpE releases ADP from DnaK; ATP binding to DnaK triggers the release of the substrate protein, thus completing the reaction cycle. Several rounds of ATP-dependent interactions between DnaJ, DnaK and GrpE are required for fully efficient folding. This Prochlorococcus marinus (strain MIT 9301) protein is Protein GrpE.